A 244-amino-acid polypeptide reads, in one-letter code: tRNA (guanine-N(7)-)-methyltransferase (244 aa).

Residues 1 to 20 (MTNPFDSAGSKAPPKPFTVS) form a disordered region. S-adenosyl-L-methionine is bound by residues Glu75, Glu100, Asp127, and Asp150. The active site involves Asp150. Position 154 (Lys154) interacts with substrate. Residues 156–161 (RHNKRR) are interaction with RNA. Substrate contacts are provided by residues Asp186 and 223-226 (THFE).

It belongs to the class I-like SAM-binding methyltransferase superfamily. TrmB family.

It catalyses the reaction guanosine(46) in tRNA + S-adenosyl-L-methionine = N(7)-methylguanosine(46) in tRNA + S-adenosyl-L-homocysteine. It functions in the pathway tRNA modification; N(7)-methylguanine-tRNA biosynthesis. Catalyzes the formation of N(7)-methylguanine at position 46 (m7G46) in tRNA. In Stenotrophomonas maltophilia (strain K279a), this protein is tRNA (guanine-N(7)-)-methyltransferase.